A 204-amino-acid polypeptide reads, in one-letter code: Altered inheritance of mitochondria protein 20 (204 aa).

The chain crosses the membrane as a helical span at residues 6-26; the sequence is VAVGTAVGIPIAVGVIIALIF.

This sequence belongs to the SKG1 family.

Its subcellular location is the vacuole membrane. Its function is as follows. Involved in cell cycle progression and surviving DNA damage. The polypeptide is Altered inheritance of mitochondria protein 20 (AIM20) (Saccharomyces cerevisiae (strain RM11-1a) (Baker's yeast)).